Consider the following 689-residue polypeptide: Glycine--tRNA ligase beta subunit (689 aa).

Belongs to the class-II aminoacyl-tRNA synthetase family. In terms of assembly, tetramer of two alpha and two beta subunits.

The protein localises to the cytoplasm. The catalysed reaction is tRNA(Gly) + glycine + ATP = glycyl-tRNA(Gly) + AMP + diphosphate. The chain is Glycine--tRNA ligase beta subunit from Actinobacillus succinogenes (strain ATCC 55618 / DSM 22257 / CCUG 43843 / 130Z).